The primary structure comprises 433 residues: MLDIQLLRKDLDGVAKRLADRGYPLDVAAFSALEAERRAIQTRTEELQARRNSLSKQIGAMKGRGEDTSAVMAEVGGIGDEMKASAVKLDEIQARLSELMLEMPNVPHESVPVGRDETENVEVRRWGAPRQFDFDVKDHVDVGTPLGLDFETGAKLSGARFTVLRGPIARLHRALAQFMLDTHTQQHGYSETYTPYIVNPDVLYGTGQLPKFAEDMFRVEKGGAENTVTQYLISTSEISLTNTVRDSIIEASALPIKLTAHSPCFRSEAGSYGRDTRGMIRQHQFDKVEMVQIVAPEASYAALDEMVGHAEAILQKLELPYRVVALCTGDMGFSAAKTFDLEVWLPAQNTYREISSCSNTESFQARRMQARFRNAQGKPELVHTLNGSGLAVGRTLVAVLENYQNADGSVTVPVALRPYMGGVERIDAPSSAA.

235 to 237 is a binding site for L-serine; that stretch reads TSE. 266–268 contacts ATP; the sequence is RSE. Residue Glu-289 participates in L-serine binding. ATP is bound at residue 353 to 356; it reads EISS. L-serine is bound at residue Ser-388.

The protein belongs to the class-II aminoacyl-tRNA synthetase family. Type-1 seryl-tRNA synthetase subfamily. Homodimer. The tRNA molecule binds across the dimer.

Its subcellular location is the cytoplasm. The catalysed reaction is tRNA(Ser) + L-serine + ATP = L-seryl-tRNA(Ser) + AMP + diphosphate + H(+). The enzyme catalyses tRNA(Sec) + L-serine + ATP = L-seryl-tRNA(Sec) + AMP + diphosphate + H(+). Its pathway is aminoacyl-tRNA biosynthesis; selenocysteinyl-tRNA(Sec) biosynthesis; L-seryl-tRNA(Sec) from L-serine and tRNA(Sec): step 1/1. Functionally, catalyzes the attachment of serine to tRNA(Ser). Is also able to aminoacylate tRNA(Sec) with serine, to form the misacylated tRNA L-seryl-tRNA(Sec), which will be further converted into selenocysteinyl-tRNA(Sec). The chain is Serine--tRNA ligase from Burkholderia pseudomallei (strain 668).